The primary structure comprises 141 residues: U1 small nuclear ribonucleoprotein C (141 aa).

A Matrin-type zinc finger spans residues Tyr4–Leu36. Residues Leu69–Gln141 form a disordered region. Residues Met83–Gln97 are compositionally biased toward pro residues. Composition is skewed to low complexity over residues Gly100–Met110 and Gln124–Gln141.

The protein belongs to the U1 small nuclear ribonucleoprotein C family. In terms of assembly, component of the U1 snRNP. The U1 snRNP is composed of the U1 snRNA and the 7 core Sm proteins SNRPB, SNRPD1, SNRPD2, SNRPD3, SNRPE, SNRPF and SNRPG that assemble in a heptameric protein ring on the Sm site of the small nuclear RNA to form the core snRNP, and at least 3 U1 snRNP-specific proteins SNRNP70/U1-70K, SNRPA/U1-A and SNRPC/U1-C. SNRPC/U1-C interacts with U1 snRNA and the 5' splice-site region of the pre-mRNA.

It is found in the nucleus. In terms of biological role, component of the spliceosomal U1 snRNP, which is essential for recognition of the pre-mRNA 5' splice-site and the subsequent assembly of the spliceosome. SNRPC/U1-C is directly involved in initial 5' splice-site recognition for both constitutive and regulated alternative splicing. The interaction with the 5' splice-site seems to precede base-pairing between the pre-mRNA and the U1 snRNA. Stimulates commitment or early (E) complex formation by stabilizing the base pairing of the 5' end of the U1 snRNA and the 5' splice-site region. In Heterostelium pallidum (strain ATCC 26659 / Pp 5 / PN500) (Cellular slime mold), this protein is U1 small nuclear ribonucleoprotein C.